Reading from the N-terminus, the 401-residue chain is Glutamyl-tRNA reductase (401 aa).

Substrate contacts are provided by residues 45-48 (TCNR), S101, 106-108 (EDQ), and Q112. The active-site Nucleophile is the C46. 177 to 182 (GYGDVG) contributes to the NADP(+) binding site.

This sequence belongs to the glutamyl-tRNA reductase family. In terms of assembly, homodimer.

It catalyses the reaction (S)-4-amino-5-oxopentanoate + tRNA(Glu) + NADP(+) = L-glutamyl-tRNA(Glu) + NADPH + H(+). It participates in porphyrin-containing compound metabolism; protoporphyrin-IX biosynthesis; 5-aminolevulinate from L-glutamyl-tRNA(Glu): step 1/2. Functionally, catalyzes the NADPH-dependent reduction of glutamyl-tRNA(Glu) to glutamate 1-semialdehyde (GSA). This chain is Glutamyl-tRNA reductase, found in Clostridium botulinum (strain Eklund 17B / Type B).